The sequence spans 98 residues: Class II hydrophobin 1 (98 aa).

Positions 1–16 (MQFFTTVVLFAAAAMA) are cleaved as a signal peptide. Disulfide bonds link Cys-29/Cys-79, Cys-39/Cys-70, Cys-40/Cys-52, and Cys-80/Cys-92.

Belongs to the cerato-ulmin hydrophobin family. In terms of assembly, homodimer. Homodimers further self-assemble to form highly ordered films at water-air interfaces through intermolecular interactions. In terms of tissue distribution, expressed in mycelium, conidiating mycelium and aerial hyphae.

It is found in the secreted. The protein resides in the cell wall. Its function is as follows. Aerial growth, conidiation, and dispersal of filamentous fungi in the environment rely upon a capability of their secreting small amphipathic proteins called hydrophobins (HPBs) with low sequence identity. Class I can self-assemble into an outermost layer of rodlet bundles on aerial cell surfaces, conferring cellular hydrophobicity that supports fungal growth, development and dispersal; whereas Class II form highly ordered films at water-air interfaces through intermolecular interactions but contribute nothing to the rodlet structure. Hyd1 is a class II hydrophobin that plays probably a role during conidiophore development and in intraspecific signaling or hyphal fusion. Hyd1 and Hyd3 are jointly required for conidial hydrophobicity and dispersal, but seem not to be involved in mycelia hydrophobicity. Inhibits conidial germination in environments not suitable for mycelial growth. Not necessary for root adhesion and colonization. This Bionectria ochroleuca (Gliocladium roseum) protein is Class II hydrophobin 1.